The primary structure comprises 231 residues: Chromosome partition protein MukE (231 aa).

A disordered region spans residues 197–231 (RDGEAMPIEGGLSLDDSENDETSDNSAEGTGDEQP).

This sequence belongs to the MukE family. In terms of assembly, interacts, and probably forms a ternary complex, with MukF and MukB. The complex formation is stimulated by calcium or magnesium.

It is found in the cytoplasm. Its subcellular location is the nucleoid. In terms of biological role, involved in chromosome condensation, segregation and cell cycle progression. May participate in facilitating chromosome segregation by condensation DNA from both sides of a centrally located replisome during cell division. Probably acts via its interaction with MukB and MukF. This chain is Chromosome partition protein MukE, found in Photorhabdus laumondii subsp. laumondii (strain DSM 15139 / CIP 105565 / TT01) (Photorhabdus luminescens subsp. laumondii).